The sequence spans 117 residues: Large ribosomal subunit protein bL20 (117 aa).

Belongs to the bacterial ribosomal protein bL20 family.

In terms of biological role, binds directly to 23S ribosomal RNA and is necessary for the in vitro assembly process of the 50S ribosomal subunit. It is not involved in the protein synthesizing functions of that subunit. The polypeptide is Large ribosomal subunit protein bL20 (Crocosphaera subtropica (strain ATCC 51142 / BH68) (Cyanothece sp. (strain ATCC 51142))).